We begin with the raw amino-acid sequence, 377 residues long: Outer membrane porin N (377 aa).

The N-terminal stretch at 1-21 (MKSKVLALLIPALLAAGAAHA) is a signal peptide. A compositionally biased stretch (polar residues) spans 175-189 (NNEGASNGQEGTNNG). The interval 175–196 (NNEGASNGQEGTNNGRDVRHEN) is disordered.

Belongs to the Gram-negative porin family. In terms of assembly, homotrimer.

The protein localises to the cell outer membrane. In terms of biological role, forms pores that allow passive diffusion of small molecules across the outer membrane. Non-specific porin. The chain is Outer membrane porin N (ompN) from Escherichia coli (strain K12).